The chain runs to 600 residues: MESCKIICISQTGYDKDISSIKENFAGCDFIKSIDMDQVTSNNILRFFKHYDNDIFTLNTVKTIMNHYNAWEKIANSNDNIDIYFIIDEAVTTPKTISLTRQLLLKKTNDQQIIFVGGNSDLQCQDLNIRPFDHKNSNFLSAYLITKLAVKILLEYIYYNGIKTTINKIINDCFGNCFESIPYLFMVNSQNEKNVFDNKRITFPMIDNNFEFNDYIFYPNLDSAGNDICEVYADIPTLREIANKDDNCIGFNTYGWIKFFVTKEERFTMLKNKYYRCDGLYVKKRHDQLIKKRNTIMTQDKIKIVREKLSNSFVKIFVNNDAKKYSWHLVEAVLKIFPNYKLVGPTDNYDISINHLVEQFIFRPDSFNILITGEPTMNITYFDMCIDTKYTSQSSITVYYPFIFSSMREHRKSLNHTDYIKPKTKFCAYMYNMRYPHRIWYFNLVSKYRQVDALGKCCNNVDIKDSRSHFTEESTYNDIAIELYSEYKFVLALENIFWPGYSTEKLINPMIANSIPIYWGDSTIFKHINKKRTIYIPDFPNETDLLEHIKNIDTNDELYKSIINEPIYINPDFSLDKLEENLSINIGKVFSDQEIQTLYI.

Belongs to the glycosyltransferase 10 family.

The chain is Putative fucosyltransferase R654 from Acanthamoeba polyphaga mimivirus (APMV).